A 264-amino-acid polypeptide reads, in one-letter code: PDZ domain-containing protein 9 (264 aa).

One can recognise a PDZ domain in the interval Q30–R109.

This Homo sapiens (Human) protein is PDZ domain-containing protein 9 (PDZD9).